The chain runs to 100 residues: ATP phosphoribosyltransferase (100 aa).

This sequence belongs to the ATP phosphoribosyltransferase family. Long subfamily. As to quaternary structure, equilibrium between an active dimeric form, an inactive hexameric form and higher aggregates. Interconversion between the various forms is largely reversible and is influenced by the natural substrates and inhibitors of the enzyme. It depends on Mg(2+) as a cofactor.

It is found in the cytoplasm. It carries out the reaction 1-(5-phospho-beta-D-ribosyl)-ATP + diphosphate = 5-phospho-alpha-D-ribose 1-diphosphate + ATP. It functions in the pathway amino-acid biosynthesis; L-histidine biosynthesis; L-histidine from 5-phospho-alpha-D-ribose 1-diphosphate: step 1/9. Feedback inhibited by histidine. Catalyzes the condensation of ATP and 5-phosphoribose 1-diphosphate to form N'-(5'-phosphoribosyl)-ATP (PR-ATP). Has a crucial role in the pathway because the rate of histidine biosynthesis seems to be controlled primarily by regulation of HisG enzymatic activity. The protein is ATP phosphoribosyltransferase (hisG) of Klebsiella pneumoniae.